We begin with the raw amino-acid sequence, 61 residues long: Large ribosomal subunit protein uL30 (61 aa).

Belongs to the universal ribosomal protein uL30 family. As to quaternary structure, part of the 50S ribosomal subunit.

The chain is Large ribosomal subunit protein uL30 from Corynebacterium aurimucosum (strain ATCC 700975 / DSM 44827 / CIP 107346 / CN-1) (Corynebacterium nigricans).